Here is a 637-residue protein sequence, read N- to C-terminus: Sodium-dependent phosphate transport protein 2A (637 aa).

The Cytoplasmic portion of the chain corresponds to 1-103 (MMSYSERLGG…LAQVGTKLLK (103 aa)). Serine 14 and serine 34 each carry phosphoserine. Residues 104 to 125 (VPLMLAFLYLFVCSLDVLSSAF) traverse the membrane as a helical segment. Residues 126–145 (QLAGGKVAGDIFKDNAILSN) are Extracellular-facing. Residues 146–163 (PVAGLVVGILVTVLVQSS) traverse the membrane as a helical segment. Residues 164–165 (ST) lie on the Cytoplasmic side of the membrane. Residues 166-185 (STSIIVSMVSSGLLEVSSAI) form a helical membrane-spanning segment. Over 186-345 (PIIMGSNIGT…HIFVDTGLPD (160 aa)) the chain is Extracellular. 2 cysteine pairs are disulfide-bonded: cysteine 225–cysteine 520 and cysteine 306–cysteine 334. 2 N-linked (GlcNAc...) asparagine glycosylation sites follow: asparagine 298 and asparagine 328. Residues 346–368 (LAVGLILLAGSLVVLCTCLILLV) form a helical membrane-spanning segment. At 369-410 (KMLNSLLKGQVMSSRRSSTQTDFPAPFTWVTGYFAMVVGASM) the chain is on the cytoplasmic side. A helical membrane pass occupies residues 411 to 434 (TFVVQSSSVFTSAITPLIGLGVIS). The Extracellular portion of the chain corresponds to 435–464 (IERAYPLTLGSNIGTTTTAILAALASPREK). Residues 465 to 485 (LSSSFQIALCHFFFNISGILL) form a helical membrane-spanning segment. Over 486–511 (WYPLPCTRLPIRMAKALGKRTAKYRW) the chain is Cytoplasmic. At threonine 506 the chain carries Phosphothreonine; by PKC. A helical membrane pass occupies residues 512–532 (FAVLYLLVCFLLLPSLVFGIS). At 533 to 537 (MAGWQ) the chain is on the extracellular side. The helical transmembrane segment at 538-559 (AMVGVGTPFGALLAFVVLVNVL) threads the bilayer. Topologically, residues 560–637 (QSRSPGHLPK…LPAHHNATRL (78 aa)) are cytoplasmic. Serine 605 bears the Phosphoserine mark. Position 621 is a phosphothreonine (threonine 621). Serine 623 carries the post-translational modification Phosphoserine.

It belongs to the SLC34A transporter family. In terms of assembly, interacts via its C-terminal region with NHERF4. Interacts with NHERF1. Interacts with TMEM174; regulates SLC34A1 internalization by PTH and FGF23. In terms of tissue distribution, kidney.

Its subcellular location is the apical cell membrane. It localises to the cell membrane. It catalyses the reaction 3 Na(+)(out) + phosphate(out) = 3 Na(+)(in) + phosphate(in). Its function is as follows. Involved in actively transporting phosphate into cells via Na(+) cotransport in the renal brush border membrane. The cotransport has a Na(+):Pi stoichiometry of 3:1 and is electrogenic. This chain is Sodium-dependent phosphate transport protein 2A, found in Mus musculus (Mouse).